The sequence spans 740 residues: Alpha-1,6-mannosylglycoprotein 6-beta-N-acetylglucosaminyltransferase A (740 aa).

The Cytoplasmic segment spans residues 1 to 13; it reads MAFFSPWKLSSQK. Residues 14 to 30 traverse the membrane as a helical; Signal-anchor for type II membrane protein segment; sequence LGFFLVTFGFIWGMMLL. The Lumenal portion of the chain corresponds to 31-740; it reads HFTIQQRTQP…GQVALCKDCL (710 aa). 3 N-linked (GlcNAc...) asparagine glycosylation sites follow: asparagine 109, asparagine 114, and asparagine 117. Disulfide bonds link cysteine 144-cysteine 182, cysteine 155-cysteine 195, cysteine 171-cysteine 337, cysteine 371-cysteine 625, cysteine 648-cysteine 723, cysteine 652-cysteine 725, cysteine 659-cysteine 712, cysteine 680-cysteine 701, and cysteine 736-cysteine 739. Residues 212–740 are sufficient for catalytic activity; it reads NSLAEIRTDF…GQVALCKDCL (529 aa). Residue asparagine 333 is glycosylated (N-linked (GlcNAc...) asparagine). 377–378 is a binding site for substrate; the sequence is DS. N-linked (GlcNAc...) asparagine glycans are attached at residues asparagine 432 and asparagine 446. Glutamate 525 is a binding site for UDP-N-acetyl-alpha-D-glucosamine. Lysine 553 contributes to the substrate binding site.

This sequence belongs to the glycosyltransferase 18 family. In terms of processing, N-glycosylated. A secreted form is released from the membrane after cleavage by gamma-secretase. In terms of tissue distribution, detected in kidney (at protein level). Detected in kidney.

It localises to the golgi apparatus membrane. It is found in the secreted. It catalyses the reaction N(4)-{beta-D-GlcNAc-(1-&gt;2)-[beta-D-GlcNAc-(1-&gt;4)]-alpha-D-Man-(1-&gt;3)-[beta-D-GlcNAc-(1-&gt;2)-alpha-D-Man-(1-&gt;6)]-beta-D-Man-(1-&gt;4)-beta-D-GlcNAc-(1-&gt;4)-beta-D-GlcNAc}-L-asparaginyl-[protein] + UDP-N-acetyl-alpha-D-glucosamine = N(4)-{beta-D-GlcNAc-(1-&gt;2)-[beta-D-GlcNAc-(1-&gt;4)]-alpha-D-Man-(1-&gt;3)-[beta-D-GlcNAc-(1-&gt;2)-[beta-D-GlcNAc-(1-&gt;6)]-alpha-D-Man-(1-&gt;6)]-beta-D-Man-(1-&gt;4)-beta-D-GlcNAc-(1-&gt;4)-beta-D-GlcNAc}-L-asparaginyl-[protein] + UDP + H(+). Its pathway is protein modification; protein glycosylation. Catalyzes the addition of N-acetylglucosamine (GlcNAc) in beta 1-6 linkage to the alpha-linked mannose of biantennary N-linked oligosaccharides. Catalyzes an important step in the biosynthesis of branched, complex-type N-glycans, such as those found on EGFR, TGFR (TGF-beta receptor) and CDH2. Via its role in the biosynthesis of complex N-glycans, plays an important role in the activation of cellular signaling pathways, reorganization of the actin cytoskeleton, cell-cell adhesion and cell migration. MGAT5-dependent EGFR N-glycosylation enhances the interaction between EGFR and LGALS3 and thereby prevents rapid EGFR endocytosis and prolongs EGFR signaling. Required for efficient interaction between TGFB1 and its receptor. Enhances activation of intracellular signaling pathways by several types of growth factors, including FGF2, PDGF, IGF, TGFB1 and EGF. MGAT5-dependent CDH2 N-glycosylation inhibits CDH2-mediated homotypic cell-cell adhesion and contributes to the regulation of downstream signaling pathways. Promotes cell migration. Contributes to the regulation of the inflammatory response. MGAT5-dependent TCR N-glycosylation enhances the interaction between TCR and LGALS3, limits agonist-induced TCR clustering, and thereby dampens TCR-mediated responses to antigens. Required for normal leukocyte evasation and accumulation at sites of inflammation. Inhibits attachment of monocytes to the vascular endothelium and subsequent monocyte diapedesis. In terms of biological role, promotes proliferation of umbilical vein endothelial cells and angiogenesis, at least in part by promoting the release of the growth factor FGF2 from the extracellular matrix. The sequence is that of Alpha-1,6-mannosylglycoprotein 6-beta-N-acetylglucosaminyltransferase A (Mgat5) from Rattus norvegicus (Rat).